The sequence spans 75 residues: Antitoxin MT0312 (75 aa).

In terms of biological role, antitoxin component of a type II toxin-antitoxin (TA) system. The chain is Antitoxin MT0312 from Mycobacterium tuberculosis (strain CDC 1551 / Oshkosh).